A 602-amino-acid polypeptide reads, in one-letter code: Aspartate--tRNA(Asp/Asn) ligase (602 aa).

Glutamate 191 serves as a coordination point for L-aspartate. Residues 215–218 are aspartate; the sequence is QLYK. Position 237 (arginine 237) interacts with L-aspartate. Residues 237-239 and glutamine 246 contribute to the ATP site; that span reads RDE. An L-aspartate-binding site is contributed by histidine 465. Glutamate 499 contacts ATP. Arginine 506 serves as a coordination point for L-aspartate. 551-554 is an ATP binding site; the sequence is GLDR.

It belongs to the class-II aminoacyl-tRNA synthetase family. Type 1 subfamily. As to quaternary structure, homodimer.

It localises to the cytoplasm. It catalyses the reaction tRNA(Asx) + L-aspartate + ATP = L-aspartyl-tRNA(Asx) + AMP + diphosphate. In terms of biological role, aspartyl-tRNA synthetase with relaxed tRNA specificity since it is able to aspartylate not only its cognate tRNA(Asp) but also tRNA(Asn). Reaction proceeds in two steps: L-aspartate is first activated by ATP to form Asp-AMP and then transferred to the acceptor end of tRNA(Asp/Asn). This is Aspartate--tRNA(Asp/Asn) ligase from Treponema pallidum (strain Nichols).